The sequence spans 102 residues: Small ribosomal subunit protein uS10 (102 aa).

The interval 34–61 (MAGPIPLPTKTLKVTTRKSTDGEGSSSF) is disordered.

It belongs to the universal ribosomal protein uS10 family. Part of the 30S ribosomal subunit.

Functionally, involved in the binding of tRNA to the ribosomes. In Methanococcus aeolicus (strain ATCC BAA-1280 / DSM 17508 / OCM 812 / Nankai-3), this protein is Small ribosomal subunit protein uS10.